Reading from the N-terminus, the 192-residue chain is Fe/S biogenesis protein NfuA (192 aa).

Residues C149 and C152 each coordinate [4Fe-4S] cluster.

This sequence belongs to the NfuA family. In terms of assembly, homodimer. Requires [4Fe-4S] cluster as cofactor.

In terms of biological role, involved in iron-sulfur cluster biogenesis. Binds a 4Fe-4S cluster, can transfer this cluster to apoproteins, and thereby intervenes in the maturation of Fe/S proteins. Could also act as a scaffold/chaperone for damaged Fe/S proteins. In Shewanella sp. (strain MR-7), this protein is Fe/S biogenesis protein NfuA.